The sequence spans 146 residues: Anti-sigma F factor (146 aa).

The protein belongs to the anti-sigma-factor family.

The enzyme catalyses L-seryl-[protein] + ATP = O-phospho-L-seryl-[protein] + ADP + H(+). It catalyses the reaction L-threonyl-[protein] + ATP = O-phospho-L-threonyl-[protein] + ADP + H(+). In terms of biological role, binds to sigma F and blocks its ability to form an RNA polymerase holoenzyme (E-sigma F). Phosphorylates SpoIIAA on a serine residue. This phosphorylation may enable SpoIIAA to act as an anti-anti-sigma factor that counteracts SpoIIAB and thus releases sigma F from inhibition. The chain is Anti-sigma F factor from Bacillus licheniformis (strain ATCC 14580 / DSM 13 / JCM 2505 / CCUG 7422 / NBRC 12200 / NCIMB 9375 / NCTC 10341 / NRRL NRS-1264 / Gibson 46).